We begin with the raw amino-acid sequence, 189 residues long: Resolvase (189 aa).

Residues 1-139 (MLVGYARVST…EGLRSAKARG (139 aa)) form the Resolvase/invertase-type recombinase catalytic domain. The active-site O-(5'-phospho-DNA)-serine intermediate is serine 9. Positions 130 to 151 (EGLRSAKARGRNGGRPSKRNDK) are disordered. The segment at residues 165–184 (IVDIVKQTELSRATVYRILK) is a DNA-binding region (H-T-H motif).

Belongs to the site-specific recombinase resolvase family.

Its function is as follows. A likely role for the res protein would be to stabilize pCP13 by reducing the number of plasmid multimers resulting from homologous recombination. This Clostridium perfringens (strain 13 / Type A) protein is Resolvase (res).